Here is a 112-residue protein sequence, read N- to C-terminus: Photosystem II reaction center Psb28 protein (112 aa).

It belongs to the Psb28 family. Part of the photosystem II complex.

It localises to the cellular thylakoid membrane. This Synechococcus elongatus (strain ATCC 33912 / PCC 7942 / FACHB-805) (Anacystis nidulans R2) protein is Photosystem II reaction center Psb28 protein.